Reading from the N-terminus, the 336-residue chain is MDRIVEIEKVSFENDFEVSLRPSKFEDYIGQEKIKQNLDVFIKAAKKRNECLDHVLFYGPPGLGKTTLAHIIANEMGVSIKMTAAPMIEKSGDLAAILTNLQEGDVLFIDEIHRLSPAIEEVLYPAMEDFRLDIIIGSGPAAQTIKIDLPKFTLIGATTRAGMISAPLRDRFGMDFRLQFYTSSELSRIVQIASAKLGKECDKNASLEIAKRSRATPRIALRLLKRIRDFAEVNDEQIISHERAKEGLNALGVNSLGFDEMDIRYLEILMQARRRPMGLSTIAAALSEDEGTVEDVIEPYLLANGFIERTAKGRIASAKCFETFNVKIDIEKGLFE.

The interval 1-181 (MDRIVEIEKV…FGMDFRLQFY (181 aa)) is large ATPase domain (RuvB-L). Residues L20, R21, G62, K65, T66, T67, 128-130 (EDF), R171, Y181, and R218 contribute to the ATP site. T66 is a binding site for Mg(2+). The tract at residues 182–252 (TSSELSRIVQ…RAKEGLNALG (71 aa)) is small ATPAse domain (RuvB-S). A head domain (RuvB-H) region spans residues 255 to 336 (SLGFDEMDIR…KIDIEKGLFE (82 aa)). DNA is bound by residues R309 and R314.

The protein belongs to the RuvB family. Homohexamer. Forms an RuvA(8)-RuvB(12)-Holliday junction (HJ) complex. HJ DNA is sandwiched between 2 RuvA tetramers; dsDNA enters through RuvA and exits via RuvB. An RuvB hexamer assembles on each DNA strand where it exits the tetramer. Each RuvB hexamer is contacted by two RuvA subunits (via domain III) on 2 adjacent RuvB subunits; this complex drives branch migration. In the full resolvosome a probable DNA-RuvA(4)-RuvB(12)-RuvC(2) complex forms which resolves the HJ.

It localises to the cytoplasm. The catalysed reaction is ATP + H2O = ADP + phosphate + H(+). Functionally, the RuvA-RuvB-RuvC complex processes Holliday junction (HJ) DNA during genetic recombination and DNA repair, while the RuvA-RuvB complex plays an important role in the rescue of blocked DNA replication forks via replication fork reversal (RFR). RuvA specifically binds to HJ cruciform DNA, conferring on it an open structure. The RuvB hexamer acts as an ATP-dependent pump, pulling dsDNA into and through the RuvAB complex. RuvB forms 2 homohexamers on either side of HJ DNA bound by 1 or 2 RuvA tetramers; 4 subunits per hexamer contact DNA at a time. Coordinated motions by a converter formed by DNA-disengaged RuvB subunits stimulates ATP hydrolysis and nucleotide exchange. Immobilization of the converter enables RuvB to convert the ATP-contained energy into a lever motion, pulling 2 nucleotides of DNA out of the RuvA tetramer per ATP hydrolyzed, thus driving DNA branch migration. The RuvB motors rotate together with the DNA substrate, which together with the progressing nucleotide cycle form the mechanistic basis for DNA recombination by continuous HJ branch migration. Branch migration allows RuvC to scan DNA until it finds its consensus sequence, where it cleaves and resolves cruciform DNA. This Campylobacter concisus (strain 13826) protein is Holliday junction branch migration complex subunit RuvB.